The primary structure comprises 373 residues: MAENKHPDKPLKVLEQLGKEVLTEYLEKLVQSNVLKLKEEDKQKFNNAERSDKRWVFVDAMKKKHSKVGEMLLQTFFSVDPGSHHGEANLEMEEPEESLNTLKLCSPEEFTRLCREKTQEIYPIKEANGRTRKALIICNTEFKHLSLRYGANFDIIGMKGLLEDLGYDVVVKEELTAEGMESEMKDFAALSEHQTSDSTFLVLMSHGTLHGICGTMHSEKTPDVLQYDTIYQIFNNCHCPGLRDKPKVIIVQACRGGNSGEMWIRESSKPQLCRGVDLPRNMEADAVKLSHVEKDFIAFYSTTPHHLSYRDKTGGSYFITRLISCFRKHACSCHLFDIFLKVQQSFEKASIHSQMPTIDRATLTRYFYLFPGN.

A required for LPS-binding region spans residues Met-1 to Asp-59. The propeptide occupies Met-1–Asp-80. One can recognise a CARD domain in the interval Met-1–Glu-91. Residue Ser-83 is modified to Phosphoserine. Catalysis depends on residues His-206 and Cys-254. A propeptide spanning residues Ser-267–Asp-285 is cleaved from the precursor. Position 310 is a (Microbial infection) ADP-riboxanated arginine (Arg-310).

This sequence belongs to the peptidase C14A family. Heterotetramer that consists of two anti-parallel arranged heterodimers, each one formed by a 20 kDa (Caspase-4 subunit p20) and a 10 kDa (Caspase-4 subunit p10) subunit. Upon direct LPS-binding, forms large homooligomers, resulting in its activation. These oligomers are often referred to as 'non-canonical inflammasomes'. In its precursor form, interacts with TMEM214; this interaction is required for association with the endoplasmic reticulum membrane. Interacts with CASP1. Interacts with NOD2. Interacts with Serpinb1a, Serpinb1b and Serpinb1c; these interactions regulate CASP4 activity. In terms of assembly, heterotetramer that consists of two anti-parallel arranged heterodimers, each one formed by a 20 kDa (Caspase-4 subunit p20) and a 10 kDa (Caspase-4 subunit p10) subunit. In response to activation signals, undergoes autoproteolytic cleavage and activation. Post-translationally, (Microbial infection) ADP-riboxanation by S.flexneri OspC3 blocks CASP4 autoprocessing, preventing CASP4 activation and ability to recognize and cleave GSDMD, thereby thwarting the inflammasome/pyroptosis-mediated defense. Widely expressed, including in thymus, lung and spleen (at protein level). Very low levels, if any, in the brain.

It is found in the cytoplasm. The protein localises to the cytosol. It localises to the endoplasmic reticulum membrane. Its subcellular location is the mitochondrion. The protein resides in the inflammasome. It is found in the secreted. The enzyme catalyses Strict requirement for Asp at the P1 position and has a preferred cleavage sequence of (Ile/Leu/Val/Phe)-Gly-His-Asp-|-.. With respect to regulation, activated by homooligomerization induced by direct binding to cytosolic LPS, in a TLR4-independent manner. In addition to LPS, CASP4/CASP11 may also be activated by oxidized phospholipid 1-palmitoyl-2-arachidonoyl- sn-glycero-3-phosphorylcholine, an oxidized phospholipid (oxPAPC), in dendritic cells, promoting adaptive immunity. The role of oxPAPC is however unclear and another report suggests that oxPAPC competes with LPS-binding and inhibits the non-canonical inflammasome in macrophages. In terms of biological role, inflammatory caspase that acts as the effector of the non-canonical inflammasome by mediating lipopolysaccharide (LPS)-induced pyroptosis. Also indirectly activates the NLRP3 and NLRP6 inflammasomes. Acts as a thiol protease that cleaves a tetrapeptide after an Asp residue at position P1: catalyzes cleavage of CGAS and GSDMD. In contrast to its human ortholog, does not cleave IL18. Effector of the non-canonical inflammasome independently of NLRP3 inflammasome and CASP1: the non-canonical inflammasome promotes pyroptosis through GSDMD cleavage without involving secretion of cytokine IL1B and IL18. In the non-canonical inflammasome, CASP4/CASP11 is activated by direct binding to the lipid A moiety of LPS without the need of an upstream sensor. LPS-binding promotes CASP4/CASP11 activation and CASP4/CASP11-mediated cleavage of GSDMD, followed by pyroptosis of infected cells and their extrusion into the gut lumen. Also indirectly promotes secretion of mature cytokines (IL1A, IL18 and HMGB1) downstream of GSDMD-mediated pyroptosis via activation of the NLRP3 and NLRP6 inflammasomes. Involved in NLRP3-dependent CASP1 activation and IL1B and IL18 secretion in response to non-canonical activators, such as UVB radiation or cholera enterotoxin. Involved in NLRP6 inflammasome-dependent activation in response to lipoteichoic acid (LTA), a cell-wall component of Gram-positive bacteria, which leads to CASP1 activation and IL1B and IL18 secretion. Involved in LPS-induced IL6 secretion; this activity may not require caspase enzymatic activity. The non-canonical inflammasome is required for innate immunity to cytosolic, but not vacuolar, bacteria. Plays a crucial role in the restriction of S.typhimurium replication in colonic epithelial cells during infection. Activation of the non-canonical inflammasome in brain endothelial cells can lead to excessive pyroptosis, leading to blood-brain barrier breakdown. Pyroptosis limits bacterial replication, while cytokine secretion promotes the recruitment and activation of immune cells and triggers mucosal inflammation. May also act as an activator of adaptive immunity in dendritic cells, following activation by oxidized phospholipid 1-palmitoyl-2-arachidonoyl- sn-glycero-3-phosphorylcholine, an oxidized phospholipid (oxPAPC). Cleavage of GSDMD is not strictly dependent on the consensus cleavage site but depends on an exosite interface on CASP4/CASP11 that recognizes and binds the Gasdermin-D, C-terminal (GSDMD-CT) part. In contrast, it does not directly process IL1B. During non-canonical inflammasome activation, cuts CGAS and may play a role in the regulation of antiviral innate immune activation. In Mus musculus (Mouse), this protein is Caspase-4.